The chain runs to 272 residues: SKA complex subunit 1 homolog (272 aa).

A coiled-coil region spans residues alanine 48 to lysine 75.

It belongs to the SKA1 family.

The protein is SKA complex subunit 1 homolog of Arabidopsis thaliana (Mouse-ear cress).